Consider the following 207-residue polypeptide: dITP/XTP pyrophosphatase (207 aa).

10 to 15 (TRNAGK) provides a ligand contact to substrate. Residues Glu43 and Asp72 each coordinate Mg(2+). Catalysis depends on Asp72, which acts as the Proton acceptor. Substrate contacts are provided by residues Ser73, 161–164 (FGYD), Lys184, and 189–190 (HR).

Belongs to the HAM1 NTPase family. In terms of assembly, homodimer. Mg(2+) is required as a cofactor.

The catalysed reaction is XTP + H2O = XMP + diphosphate + H(+). It catalyses the reaction dITP + H2O = dIMP + diphosphate + H(+). The enzyme catalyses ITP + H2O = IMP + diphosphate + H(+). Pyrophosphatase that catalyzes the hydrolysis of nucleoside triphosphates to their monophosphate derivatives, with a high preference for the non-canonical purine nucleotides XTP (xanthosine triphosphate), dITP (deoxyinosine triphosphate) and ITP. Seems to function as a house-cleaning enzyme that removes non-canonical purine nucleotides from the nucleotide pool, thus preventing their incorporation into DNA/RNA and avoiding chromosomal lesions. The sequence is that of dITP/XTP pyrophosphatase from Nitratidesulfovibrio vulgaris (strain ATCC 29579 / DSM 644 / CCUG 34227 / NCIMB 8303 / VKM B-1760 / Hildenborough) (Desulfovibrio vulgaris).